The following is a 257-amino-acid chain: Capsid protein (257 aa).

The short motif at 3–20 (KRTGDILMSSPLSKFRRK) is the Bipartite nuclear localization signal element. The Nuclear localization signal signature appears at 40–54 (KRRSWTYRPMYRKPR). A zinc finger lies at 68-85 (CEGPCKVQSYEQRDDVKH). Residues 101–122 (ITHRVGKRFCIKSIYILGKIWM) carry the Nuclear export signal motif. The Bipartite nuclear localization signal motif lies at 201 to 248 (KRFFKVNTHVVYNHQEQAKYENHTENALLLYMACTHASNPVYATLKIR).

This sequence belongs to the geminiviridae capsid protein family. As to quaternary structure, homomultimer. Binds to single-stranded and double-stranded viral DNA. Interacts (via nuclear localization signals) with host importin alpha-1a.

It is found in the virion. Its subcellular location is the host nucleus. Functionally, encapsidates the viral genome into characteristic twinned ('geminate') particles. Binds the genomic viral ssDNA and shuttles it into and out of the cell nucleus. Plays a role in protection of the genome from degradation, virus acquisition and transmission by insect vectors, infectivity, and systemic movement. The CP of monopartite geminiviruses is absolutely essential for virus movement. This chain is Capsid protein, found in Solanum lycopersicum (Tomato).